Reading from the N-terminus, the 158-residue chain is Transcription elongation factor GreA (158 aa).

This sequence belongs to the GreA/GreB family.

Necessary for efficient RNA polymerase transcription elongation past template-encoded arresting sites. The arresting sites in DNA have the property of trapping a certain fraction of elongating RNA polymerases that pass through, resulting in locked ternary complexes. Cleavage of the nascent transcript by cleavage factors such as GreA or GreB allows the resumption of elongation from the new 3'terminus. GreA releases sequences of 2 to 3 nucleotides. The chain is Transcription elongation factor GreA from Pelagibacter ubique (strain HTCC1062).